We begin with the raw amino-acid sequence, 337 residues long: Phenylalanine--tRNA ligase alpha subunit (337 aa).

Glutamate 258 is a binding site for Mg(2+).

This sequence belongs to the class-II aminoacyl-tRNA synthetase family. Phe-tRNA synthetase alpha subunit type 1 subfamily. Tetramer of two alpha and two beta subunits. Requires Mg(2+) as cofactor.

The protein localises to the cytoplasm. The enzyme catalyses tRNA(Phe) + L-phenylalanine + ATP = L-phenylalanyl-tRNA(Phe) + AMP + diphosphate + H(+). The polypeptide is Phenylalanine--tRNA ligase alpha subunit (Burkholderia thailandensis (strain ATCC 700388 / DSM 13276 / CCUG 48851 / CIP 106301 / E264)).